A 342-amino-acid chain; its full sequence is Holliday junction branch migration complex subunit RuvB (342 aa).

Residues 1-185 (MRKDYLNSNK…FGINTRLAYY (185 aa)) form a large ATPase domain (RuvB-L) region. Residues Leu-24, Arg-25, Gly-66, Lys-69, Thr-70, Thr-71, 132–134 (EDF), Arg-175, Tyr-185, and Arg-222 contribute to the ATP site. Residue Thr-70 coordinates Mg(2+). The small ATPAse domain (RuvB-S) stretch occupies residues 186-256 (DVTLLTQIVK…IAQMALKALD (71 aa)). The tract at residues 259 to 342 (EDGLDEMDNR…PPQRAGTLFE (84 aa)) is head domain (RuvB-H). DNA is bound by residues Arg-314 and Arg-319.

This sequence belongs to the RuvB family. As to quaternary structure, homohexamer. Forms an RuvA(8)-RuvB(12)-Holliday junction (HJ) complex. HJ DNA is sandwiched between 2 RuvA tetramers; dsDNA enters through RuvA and exits via RuvB. An RuvB hexamer assembles on each DNA strand where it exits the tetramer. Each RuvB hexamer is contacted by two RuvA subunits (via domain III) on 2 adjacent RuvB subunits; this complex drives branch migration. In the full resolvosome a probable DNA-RuvA(4)-RuvB(12)-RuvC(2) complex forms which resolves the HJ.

Its subcellular location is the cytoplasm. The enzyme catalyses ATP + H2O = ADP + phosphate + H(+). The RuvA-RuvB-RuvC complex processes Holliday junction (HJ) DNA during genetic recombination and DNA repair, while the RuvA-RuvB complex plays an important role in the rescue of blocked DNA replication forks via replication fork reversal (RFR). RuvA specifically binds to HJ cruciform DNA, conferring on it an open structure. The RuvB hexamer acts as an ATP-dependent pump, pulling dsDNA into and through the RuvAB complex. RuvB forms 2 homohexamers on either side of HJ DNA bound by 1 or 2 RuvA tetramers; 4 subunits per hexamer contact DNA at a time. Coordinated motions by a converter formed by DNA-disengaged RuvB subunits stimulates ATP hydrolysis and nucleotide exchange. Immobilization of the converter enables RuvB to convert the ATP-contained energy into a lever motion, pulling 2 nucleotides of DNA out of the RuvA tetramer per ATP hydrolyzed, thus driving DNA branch migration. The RuvB motors rotate together with the DNA substrate, which together with the progressing nucleotide cycle form the mechanistic basis for DNA recombination by continuous HJ branch migration. Branch migration allows RuvC to scan DNA until it finds its consensus sequence, where it cleaves and resolves cruciform DNA. The protein is Holliday junction branch migration complex subunit RuvB of Amoebophilus asiaticus (strain 5a2).